The primary structure comprises 339 residues: Anthranilate phosphoribosyltransferase (339 aa).

5-phospho-alpha-D-ribose 1-diphosphate is bound by residues glycine 81, 84 to 85, serine 89, 91 to 94, 109 to 117, and alanine 121; these read GD, NVSS, and KHGNRALSS. Residue glycine 81 coordinates anthranilate. Mg(2+) is bound at residue serine 93. Asparagine 112 contributes to the anthranilate binding site. Arginine 167 provides a ligand contact to anthranilate. Residues aspartate 225 and glutamate 226 each coordinate Mg(2+).

It belongs to the anthranilate phosphoribosyltransferase family. Homodimer. Requires Mg(2+) as cofactor.

It catalyses the reaction N-(5-phospho-beta-D-ribosyl)anthranilate + diphosphate = 5-phospho-alpha-D-ribose 1-diphosphate + anthranilate. It functions in the pathway amino-acid biosynthesis; L-tryptophan biosynthesis; L-tryptophan from chorismate: step 2/5. Catalyzes the transfer of the phosphoribosyl group of 5-phosphorylribose-1-pyrophosphate (PRPP) to anthranilate to yield N-(5'-phosphoribosyl)-anthranilate (PRA). This chain is Anthranilate phosphoribosyltransferase, found in Brucella suis (strain ATCC 23445 / NCTC 10510).